We begin with the raw amino-acid sequence, 392 residues long: Elongation factor Tu 2 (392 aa).

The 192-residue stretch at 10 to 201 (KPHVNIGTIG…AVDSYIPTPE (192 aa)) folds into the tr-type G domain. Residues 19–26 (GHVDHGKT) form a G1 region. 19 to 26 (GHVDHGKT) is a binding site for GTP. Mg(2+) is bound at residue T26. Residues 55–59 (GITIS) form a G2 region. Residues 76–79 (DCPG) form a G3 region. GTP contacts are provided by residues 76 to 80 (DCPGH) and 131 to 134 (NKVD). A G4 region spans residues 131–134 (NKVD). Residues 169–171 (SAL) are G5.

Belongs to the TRAFAC class translation factor GTPase superfamily. Classic translation factor GTPase family. EF-Tu/EF-1A subfamily. Monomer.

The protein localises to the cytoplasm. The enzyme catalyses GTP + H2O = GDP + phosphate + H(+). In terms of biological role, GTP hydrolase that promotes the GTP-dependent binding of aminoacyl-tRNA to the A-site of ribosomes during protein biosynthesis. The protein is Elongation factor Tu 2 of Rhizobium etli (strain ATCC 51251 / DSM 11541 / JCM 21823 / NBRC 15573 / CFN 42).